The primary structure comprises 311 residues: MKVAVIGAAGGIGQALALLLKNRLPAGSDLALYDIAPVTPGVAADLSHIPTPVSIKGYAGEDPTPALEGADVVLISAGVARKPGMDRADLFNVNAGIVKSLAEKIAVVCPKACVGIITNPVNTTVPIAAEVLKKAGVYDKRRLFGITTLDVIRSETFVAELKGKDPSDIRVPVIGGHSGVTILPLLSQVEGVEFTAEEVEALTKRIQNAGTEVVEAKAGGGSATLSMGQAACRFGLALVRALQGEEGVVECAYVEGDSEHAPYFAQPVKLGKEGVEEVLSYGELSDFEKAALDGMLETLNGDINIGVEFAK.

Residues 7–13 (GAAGGIG) and Asp34 each bind NAD(+). Residues Arg81 and Arg87 each contribute to the substrate site. Residues Asn94 and 117-119 (ITN) contribute to the NAD(+) site. The substrate site is built by Asn119 and Arg153. The active-site Proton acceptor is the His177. An NAD(+)-binding site is contributed by Met227.

The protein belongs to the LDH/MDH superfamily. MDH type 1 family. Homodimer.

It carries out the reaction (S)-malate + NAD(+) = oxaloacetate + NADH + H(+). In terms of biological role, catalyzes the reversible oxidation of malate to oxaloacetate. This is Malate dehydrogenase from Vibrio parahaemolyticus serotype O3:K6 (strain RIMD 2210633).